The primary structure comprises 59 residues: UPF0337 protein MM_2677 (59 aa).

2 stretches are compositionally biased toward basic and acidic residues: residues 1–24 and 33–59; these read MKEG…KESA and MEAK…EFEK. The segment at 1–59 is disordered; it reads MKEGTKEEMEGKFSKAKGEIKESAGEMTGDIEMEAKGEAEKRKGEAQEKVGKIRKEFEK.

It belongs to the UPF0337 (CsbD) family.

The polypeptide is UPF0337 protein MM_2677 (Methanosarcina mazei (strain ATCC BAA-159 / DSM 3647 / Goe1 / Go1 / JCM 11833 / OCM 88) (Methanosarcina frisia)).